The following is a 312-amino-acid chain: MPVVDQNAIELPPRISEASVADYFALLKPRVMSLVIFTALVGLMIAPGHVHPVLGFTAILCIAVGAGASGALNMALEGDIDVLMSRTANRPIPRGRITRGEAMGFGLTLSFFSVMTLGALVNWYAGGLLAFTIFFYVVIYTMGLKRRTAQNIVIGGAAGALPPVVAWAAATGSLSVEPLLLFLIIFFWTPPHFWALALFRSDDYARAGVPMLPVVAGPDATRLQILLYTIVLVAIAAAPWPLGYFDWVYGVTSLVLGAGMLVLAINVYRHRTGSTALRATRRLFAFSILYLFALFAVLLLDVLAKAVAPLIW.

8 helical membrane-spanning segments follow: residues 34–54 (LVIF…HPVL), 56–76 (FTAI…NMAL), 119–139 (ALVN…YVVI), 152–172 (IVIG…AATG), 179–199 (LLLF…LALF), 225–245 (ILLY…LGYF), 247–267 (WVYG…AINV), and 283–303 (LFAF…LDVL).

It belongs to the UbiA prenyltransferase family. Protoheme IX farnesyltransferase subfamily.

The protein localises to the cell inner membrane. The enzyme catalyses heme b + (2E,6E)-farnesyl diphosphate + H2O = Fe(II)-heme o + diphosphate. The protein operates within porphyrin-containing compound metabolism; heme O biosynthesis; heme O from protoheme: step 1/1. Functionally, converts heme B (protoheme IX) to heme O by substitution of the vinyl group on carbon 2 of heme B porphyrin ring with a hydroxyethyl farnesyl side group. In Nitrobacter hamburgensis (strain DSM 10229 / NCIMB 13809 / X14), this protein is Protoheme IX farnesyltransferase.